The chain runs to 176 residues: MANIGIFFGTDTGKTRKIAKMIHKQLGELADAPVNINRTTLDDFMAYPVLLLGTPTLGDGQLPGLEAGCESESWSEFISGLDDASLKGKTVALFGLGDQRGYPDNFVSGMRPLFDALSARGAQMIGSWPNEGYEFSASSALEGDRFVGLVLDQDNQFDQTEARLASWLEEIKRTVL.

The region spanning 4 to 172 is the Flavodoxin-like domain; it reads IGIFFGTDTG…RLASWLEEIK (169 aa).

It belongs to the flavodoxin family. It depends on FMN as a cofactor.

Low-potential electron donor to a number of redox enzymes. NifF is the electron donor to nitrogenase. The sequence is that of Flavodoxin (nifF) from Klebsiella pneumoniae.